A 252-amino-acid chain; its full sequence is Octanoyltransferase (252 aa).

The BPL/LPL catalytic domain occupies 56 to 237; the sequence is ADTGDEIWLV…RLIANLDGAS (182 aa). Substrate-binding positions include 96-103, 168-170, and 181-183; these read RGGQITYH, ALG, and GLS. Cys-199 acts as the Acyl-thioester intermediate in catalysis.

It belongs to the LipB family.

It is found in the cytoplasm. The catalysed reaction is octanoyl-[ACP] + L-lysyl-[protein] = N(6)-octanoyl-L-lysyl-[protein] + holo-[ACP] + H(+). The protein operates within protein modification; protein lipoylation via endogenous pathway; protein N(6)-(lipoyl)lysine from octanoyl-[acyl-carrier-protein]: step 1/2. Functionally, catalyzes the transfer of endogenously produced octanoic acid from octanoyl-acyl-carrier-protein onto the lipoyl domains of lipoate-dependent enzymes. Lipoyl-ACP can also act as a substrate although octanoyl-ACP is likely to be the physiological substrate. This Burkholderia lata (strain ATCC 17760 / DSM 23089 / LMG 22485 / NCIMB 9086 / R18194 / 383) protein is Octanoyltransferase.